The sequence spans 371 residues: DNA replication and repair protein RecF (371 aa).

Residue 30–37 coordinates ATP; that stretch reads GQNGMGKT.

Belongs to the RecF family.

Its subcellular location is the cytoplasm. The RecF protein is involved in DNA metabolism; it is required for DNA replication and normal SOS inducibility. RecF binds preferentially to single-stranded, linear DNA. It also seems to bind ATP. In Phocaeicola vulgatus (strain ATCC 8482 / DSM 1447 / JCM 5826 / CCUG 4940 / NBRC 14291 / NCTC 11154) (Bacteroides vulgatus), this protein is DNA replication and repair protein RecF.